Consider the following 239-residue polypeptide: Orotidine 5'-phosphate decarboxylase (239 aa).

Substrate contacts are provided by residues Asp10, Lys32, 59-68 (DLKLHDIPNT), Thr122, Arg184, Gln193, Gly213, and Arg214. Lys61 (proton donor) is an active-site residue.

The protein belongs to the OMP decarboxylase family. Type 1 subfamily. In terms of assembly, homodimer.

The enzyme catalyses orotidine 5'-phosphate + H(+) = UMP + CO2. The protein operates within pyrimidine metabolism; UMP biosynthesis via de novo pathway; UMP from orotate: step 2/2. Catalyzes the decarboxylation of orotidine 5'-monophosphate (OMP) to uridine 5'-monophosphate (UMP). This is Orotidine 5'-phosphate decarboxylase from Shouchella clausii (strain KSM-K16) (Alkalihalobacillus clausii).